The primary structure comprises 245 residues: 1-(5-phosphoribosyl)-5-[(5-phosphoribosylamino)methylideneamino] imidazole-4-carboxamide isomerase (245 aa).

The active-site Proton acceptor is Asp7. Asp129 serves as the catalytic Proton donor.

This sequence belongs to the HisA/HisF family.

It localises to the cytoplasm. The catalysed reaction is 1-(5-phospho-beta-D-ribosyl)-5-[(5-phospho-beta-D-ribosylamino)methylideneamino]imidazole-4-carboxamide = 5-[(5-phospho-1-deoxy-D-ribulos-1-ylimino)methylamino]-1-(5-phospho-beta-D-ribosyl)imidazole-4-carboxamide. The protein operates within amino-acid biosynthesis; L-histidine biosynthesis; L-histidine from 5-phospho-alpha-D-ribose 1-diphosphate: step 4/9. This is 1-(5-phosphoribosyl)-5-[(5-phosphoribosylamino)methylideneamino] imidazole-4-carboxamide isomerase from Cronobacter sakazakii (strain ATCC BAA-894) (Enterobacter sakazakii).